We begin with the raw amino-acid sequence, 515 residues long: Galactose/methyl galactoside import ATP-binding protein MglA (515 aa).

2 ABC transporter domains span residues L8–E243 and I254–L499. Residue G40–S47 coordinates ATP.

This sequence belongs to the ABC transporter superfamily. Galactose/methyl galactoside importer (TC 3.A.1.2.3) family. The complex is composed of one ATP-binding protein (MglA), two transmembrane proteins (MglC) and a solute-binding protein (MglB).

It localises to the cell membrane. It carries out the reaction D-galactose(out) + ATP + H2O = D-galactose(in) + ADP + phosphate + H(+). It catalyses the reaction methyl beta-D-galactoside(out) + ATP + H2O = methyl beta-D-galactoside(in) + ADP + phosphate + H(+). Functionally, part of the ABC transporter complex MglABC involved in galactose/methyl galactoside import. Responsible for energy coupling to the transport system. This chain is Galactose/methyl galactoside import ATP-binding protein MglA, found in Clostridium perfringens (strain 13 / Type A).